A 179-amino-acid chain; its full sequence is NADH-quinone oxidoreductase subunit I (179 aa).

4Fe-4S ferredoxin-type domains are found at residues 49 to 79 (LTRD…LQKG) and 89 to 118 (EFFR…LTPD). [4Fe-4S] cluster is bound by residues cysteine 59, cysteine 62, cysteine 65, cysteine 69, cysteine 98, cysteine 101, cysteine 104, and cysteine 108.

The protein belongs to the complex I 23 kDa subunit family. NDH-1 is composed of 14 different subunits. Subunits NuoA, H, J, K, L, M, N constitute the membrane sector of the complex. Requires [4Fe-4S] cluster as cofactor.

Its subcellular location is the cell inner membrane. The catalysed reaction is a quinone + NADH + 5 H(+)(in) = a quinol + NAD(+) + 4 H(+)(out). In terms of biological role, NDH-1 shuttles electrons from NADH, via FMN and iron-sulfur (Fe-S) centers, to quinones in the respiratory chain. The immediate electron acceptor for the enzyme in this species is believed to be ubiquinone. Couples the redox reaction to proton translocation (for every two electrons transferred, four hydrogen ions are translocated across the cytoplasmic membrane), and thus conserves the redox energy in a proton gradient. The polypeptide is NADH-quinone oxidoreductase subunit I (Chromohalobacter salexigens (strain ATCC BAA-138 / DSM 3043 / CIP 106854 / NCIMB 13768 / 1H11)).